The sequence spans 210 residues: N-(5'-phosphoribosyl)anthranilate isomerase (210 aa).

Belongs to the TrpF family.

It carries out the reaction N-(5-phospho-beta-D-ribosyl)anthranilate = 1-(2-carboxyphenylamino)-1-deoxy-D-ribulose 5-phosphate. Its pathway is amino-acid biosynthesis; L-tryptophan biosynthesis; L-tryptophan from chorismate: step 3/5. This Staphylococcus aureus (strain bovine RF122 / ET3-1) protein is N-(5'-phosphoribosyl)anthranilate isomerase.